A 429-amino-acid chain; its full sequence is Enolase (429 aa).

A (2R)-2-phosphoglycerate-binding site is contributed by Q164. E206 acts as the Proton donor in catalysis. Residues D243, E286, and D313 each contribute to the Mg(2+) site. K338, R367, S368, and K389 together coordinate (2R)-2-phosphoglycerate. The Proton acceptor role is filled by K338.

The protein belongs to the enolase family. As to quaternary structure, homooctamer. Forms a ring-shaped particle. Mg(2+) is required as a cofactor.

The protein localises to the cytoplasm. It localises to the secreted. Its subcellular location is the cell surface. The enzyme catalyses (2R)-2-phosphoglycerate = phosphoenolpyruvate + H2O. It functions in the pathway carbohydrate degradation; glycolysis; pyruvate from D-glyceraldehyde 3-phosphate: step 4/5. Its activity is regulated as follows. Inhibited by fluoride and phosphate. Its function is as follows. Catalyzes the reversible conversion of 2-phosphoglycerate (2-PG) into phosphoenolpyruvate (PEP). It is essential for the degradation of carbohydrates via glycolysis. The chain is Enolase from Thermotoga maritima (strain ATCC 43589 / DSM 3109 / JCM 10099 / NBRC 100826 / MSB8).